Reading from the N-terminus, the 143-residue chain is Small ribosomal subunit protein bS18m (143 aa).

This sequence belongs to the bacterial ribosomal protein bS18 family. Component of the mitochondrial ribosome small subunit (28S) which comprises a 12S rRNA and about 30 distinct proteins.

It is found in the mitochondrion. This Bos taurus (Bovine) protein is Small ribosomal subunit protein bS18m (MRPS18C).